The chain runs to 162 residues: FCS-Like Zinc finger 6 (162 aa).

2 disordered regions span residues 25–47 (NLPS…YGSN) and 121–162 (RQEQ…AAAV). Positions 27 to 47 (PSESEPSNQQKPTVASPYGSN) are enriched in polar residues. An FLZ-type zinc finger spans residues 88-132 (HFLRSCALCERLLVPGRDIYMYRGDKAFCSSECRQEQMAQDERKE). Residues 147–162 (APARAKPGKGRAAAAV) show a composition bias toward low complexity.

The protein belongs to the FLZ family. Interacts with KIN10 and KIN11 via its FLZ-type zinc finger domain. In terms of tissue distribution, early expressed in hypocotyl and cotyledon. Later expressed in old or senescing leaves and in pistil, pollen and filament of open flowers.

The protein resides in the nucleus. Its subcellular location is the cytoplasm. The protein localises to the endoplasmic reticulum. In terms of biological role, may act as an adapter to facilitate the interaction of SnRK1 complex with effector proteins, conferring tissue- and stimulus-type specific differences in the SnRK1 regulation pathway. Negatively regulates KIN10 leading to a repression of the SnRK1 signaling pathway. This chain is FCS-Like Zinc finger 6, found in Arabidopsis thaliana (Mouse-ear cress).